Reading from the N-terminus, the 253-residue chain is CD151 antigen (253 aa).

The Cytoplasmic portion of the chain corresponds to 1–18 (MGEFNEKKTTCGTVCLKY). S-palmitoyl cysteine attachment occurs at residues C11 and C15. A helical membrane pass occupies residues 19 to 39 (LLFTYNCCFWLAGLAVMAVGI). The Extracellular segment spans residues 40-57 (WTLALKSDYISLLASGTY). The chain crosses the membrane as a helical span at residues 58–78 (LATAYILVVAGTVVMVTGVLG). Over 79–91 (CCATFKERRNLLR) the chain is Cytoplasmic. Residues 92–112 (LYFILLLIIFLLEIIAGILAY) traverse the membrane as a helical segment. The Extracellular segment spans residues 113-221 (AYYQQLNTEL…LETFIQEHLR (109 aa)). N159 is a glycosylation site (N-linked (GlcNAc...) asparagine). The chain crosses the membrane as a helical span at residues 222–242 (VIGAVGIGIACVQVFGMIFTC). 2 S-palmitoyl cysteine lipidation sites follow: C242 and C243. Topologically, residues 243-253 (CLYRSLKLEHY) are cytoplasmic.

Belongs to the tetraspanin (TM4SF) family. In terms of assembly, interacts with integrins ITGA3:ITGB1, ITGA5:ITGB1, ITGA3:ITGB1 and ITGA6:ITGB4 and with CD9 and CD181. Interacts (via the second extracellular domain) with integrin ITGAV:ITGB3. Interacts with ITGA3; this interaction modulates ITGA3 glycosylation pattern. Interacts with F11R. Interacts with RAC1 and CDC42; these interactions mediate physical association of RAC1 and CDC42 with integrin adhesion receptor complexes. Post-translationally, palmitoylated. Palmitoylation by ZDHHC2 regulates CD151 expression, association with other tetraspanin family proteins and function in cell adhesion. In terms of processing, ubiquitinated by RNF128 on lysine residues present in the tetraspanin amino terminus via 'Lys-48'-linked ubiquitin leading to proteasomal degradation. Expressed in a variety of tissues including vascular endothelium and epidermis. Expressed on erythroid cells, with a higher level of expression in erythroid precursors than on mature erythrocytes. Acts as a sensitive T-cell activation marker.

The protein localises to the cell membrane. Its function is as follows. Structural component of specialized membrane microdomains known as tetraspanin-enriched microdomains (TERMs), which act as platforms for receptor clustering and signaling. Plays a role in various cellular and molecular mechanism through its association with both integrin and non-integrin proteins. These interactions facilitate critical cellular functions, including cell-to-cell communication, wound healing, platelet aggregation, trafficking, cell motility, and angiogenesis. Via interaction with JAM-A/F11R and integrin ITGA3:ITGB1, promotes the recruitment of signaling molecules such as RAC1, CDC42 and RhoGTPases to facilitate the polarization of epithelial cells and the reorganization of the actin cytoskeleton, which are critical steps in cell migration process. Regulates the glycosylation pattern of ITGA3:ITGB1 thereby modulating its activity. Plays an essential role in the maintenance of central laminin-binding integrin ITGA6:ITGB4-containing adhesion complexes. Essential for the proper assembly of the glomerular and tubular basement membranes in kidney. Contributes to T-cell activation by modulating integrin signaling leading to activation of downstream targets PTK2 and MAPK1/MAPK3. Functionally, (Microbial infection) Plays a role in human papillomavirus 16/HPV-16 endocytosis upon binding to cell surface receptor. In terms of biological role, (Microbial infection) Plays a role in human cytomegalovirus entry into host cell by contributing to entry receptor binding, membrane fusion, or release of the capsid. In Homo sapiens (Human), this protein is CD151 antigen (CD151).